A 611-amino-acid polypeptide reads, in one-letter code: O-fucosyltransferase 8 (611 aa).

A disordered region spans residues 1–29; sequence MGKQGSPRSPRPETIDKEEKFGRRSLDSL. Basic and acidic residues predominate over residues 10 to 26; sequence PRPETIDKEEKFGRRSL. A helical; Signal-anchor for type II membrane protein transmembrane segment spans residues 78–98; sequence IVLMISVTGFIFCMDSIMVSI. Residues asparagine 115, asparagine 216, and asparagine 270 are each glycosylated (N-linked (GlcNAc...) asparagine). A substrate-binding site is contributed by 386-388; that stretch reads HLR. Asparagine 506 is a glycosylation site (N-linked (GlcNAc...) asparagine).

Belongs to the glycosyltransferase GT106 family.

Its subcellular location is the membrane. It functions in the pathway glycan metabolism. This chain is O-fucosyltransferase 8, found in Arabidopsis thaliana (Mouse-ear cress).